Here is a 403-residue protein sequence, read N- to C-terminus: Chorismate synthase (403 aa).

2 residues coordinate NADP(+): Arg-40 and Arg-46. Residues 140 to 142 (RSS) and 261 to 262 (QA) each bind FMN. Residues 277–298 (RRGSEAHDEMVRTDEGVDRETN) are compositionally biased toward basic and acidic residues. Residues 277–307 (RRGSEAHDEMVRTDEGVDRETNRAGGLEGGM) form a disordered region. FMN is bound by residues Gly-305, 320–324 (KPIST), and Arg-346.

This sequence belongs to the chorismate synthase family. In terms of assembly, homotetramer. FMNH2 serves as cofactor.

The enzyme catalyses 5-O-(1-carboxyvinyl)-3-phosphoshikimate = chorismate + phosphate. It participates in metabolic intermediate biosynthesis; chorismate biosynthesis; chorismate from D-erythrose 4-phosphate and phosphoenolpyruvate: step 7/7. In terms of biological role, catalyzes the anti-1,4-elimination of the C-3 phosphate and the C-6 proR hydrogen from 5-enolpyruvylshikimate-3-phosphate (EPSP) to yield chorismate, which is the branch point compound that serves as the starting substrate for the three terminal pathways of aromatic amino acid biosynthesis. This reaction introduces a second double bond into the aromatic ring system. This chain is Chorismate synthase, found in Corynebacterium aurimucosum (strain ATCC 700975 / DSM 44827 / CIP 107346 / CN-1) (Corynebacterium nigricans).